The primary structure comprises 136 residues: Large ribosomal subunit protein uL16 (136 aa).

It belongs to the universal ribosomal protein uL16 family. As to quaternary structure, part of the 50S ribosomal subunit.

Binds 23S rRNA and is also seen to make contacts with the A and possibly P site tRNAs. In Rickettsia bellii (strain OSU 85-389), this protein is Large ribosomal subunit protein uL16.